The sequence spans 142 residues: Transcriptional regulator MraZ (142 aa).

SpoVT-AbrB domains are found at residues 5-47 and 76-119; these read EYQH…PLDE and ACEV…SKEK.

The protein belongs to the MraZ family. As to quaternary structure, forms oligomers.

It localises to the cytoplasm. The protein resides in the nucleoid. The polypeptide is Transcriptional regulator MraZ (Clostridium beijerinckii (strain ATCC 51743 / NCIMB 8052) (Clostridium acetobutylicum)).